We begin with the raw amino-acid sequence, 435 residues long: GTPase Der (435 aa).

2 consecutive EngA-type G domains span residues 3–168 (PLVA…PDET) and 176–351 (IKLA…QNRQ). Residues 9–16 (GRPNVGKS), 56–60 (DTGGY), 120–123 (NKVE), 182–189 (GRPNVGKS), 229–233 (DTAGL), and 294–297 (NKWD) contribute to the GTP site. The region spanning 352–435 (KKISTSELNR…VPVSFRYRKK (84 aa)) is the KH-like domain.

This sequence belongs to the TRAFAC class TrmE-Era-EngA-EngB-Septin-like GTPase superfamily. EngA (Der) GTPase family. As to quaternary structure, associates with the 50S ribosomal subunit.

In terms of biological role, GTPase that plays an essential role in the late steps of ribosome biogenesis. The protein is GTPase Der of Chlorobium phaeobacteroides (strain BS1).